The chain runs to 389 residues: Probable family 17 glucosidase SCW10 (389 aa).

Residues 1 to 18 (MRFSNFLTVSALLTGALG) form the signal peptide. A propeptide spanning residues 19-29 (APAVRHKHEKR) is cleaved from the precursor. The interval 70–134 (ASQATTSTLE…SSASSSISAS (65 aa)) is disordered. N-linked (GlcNAc...) asparagine glycosylation occurs at asparagine 279. Glutamate 326 (nucleophile) is an active-site residue.

This sequence belongs to the glycosyl hydrolase 17 family. Post-translationally, glycosylated.

The protein localises to the secreted. It is found in the cell wall. Glucanases possibly play a role in cell expansion during growth, in cell-cell fusion during mating, and in spore release during sporulation. The sequence is that of Probable family 17 glucosidase SCW10 (SCW10) from Saccharomyces cerevisiae (strain ATCC 204508 / S288c) (Baker's yeast).